The sequence spans 334 residues: Mevalonate kinase (334 aa).

Position 110–120 (110–120 (PVGAGLGSSAA)) interacts with ATP. Asp-161 acts as the Proton acceptor in catalysis.

Belongs to the GHMP kinase family. Mevalonate kinase subfamily. As to quaternary structure, homodimer. Mg(2+) is required as a cofactor.

It localises to the cytoplasm. The enzyme catalyses (R)-mevalonate + ATP = (R)-5-phosphomevalonate + ADP + H(+). It functions in the pathway isoprenoid biosynthesis; isopentenyl diphosphate biosynthesis via mevalonate pathway; isopentenyl diphosphate from (R)-mevalonate: step 1/3. Catalyzes the phosphorylation of (R)-mevalonate (MVA) to (R)-mevalonate 5-phosphate (MVAP). Functions in the mevalonate (MVA) pathway leading to isopentenyl diphosphate (IPP), a key precursor for the biosynthesis of isoprenoid compounds such as archaeal membrane lipids. This chain is Mevalonate kinase, found in Pyrococcus furiosus (strain ATCC 43587 / DSM 3638 / JCM 8422 / Vc1).